A 191-amino-acid chain; its full sequence is Signal peptidase complex catalytic subunit sec11 (191 aa).

Over 1 to 18 (MLSALGGNLSNARQSIAQ) the chain is Cytoplasmic. A helical; Signal-anchor for type II membrane protein transmembrane segment spans residues 19–39 (VLNFALVLSTAFMLWKGVSIA). Residues 40–191 (SNSSSPIVVV…MGLMVILQRE (152 aa)) lie on the Lumenal side of the membrane. Asn-41 is a glycosylation site (N-linked (GlcNAc...) asparagine). Residues Ser-53, His-92, and Asp-133 each act as charge relay system in the active site. Residues 177 to 188 (VLLGVMGLMVIL) are C-terminal short (CTS) helix.

Belongs to the peptidase S26B family. Component of the signal peptidase complex (SPC) composed of a catalytic subunit SEC11 and three accessory subunits SPC1, SPC2 and SPC3. The complex induces a local thinning of the ER membrane which is used to measure the length of the signal peptide (SP) h-region of protein substrates. This ensures the selectivity of the complex towards h-regions shorter than 18-20 amino acids. SPC associates with the translocon complex.

Its subcellular location is the endoplasmic reticulum membrane. It carries out the reaction Cleavage of hydrophobic, N-terminal signal or leader sequences from secreted and periplasmic proteins.. Functionally, catalytic component of the signal peptidase complex (SPC) which catalyzes the cleavage of N-terminal signal sequences from nascent proteins as they are translocated into the lumen of the endoplasmic reticulum. Specifically cleaves N-terminal signal peptides that contain a hydrophobic alpha-helix (h-region) shorter than 18-20 amino acids. The chain is Signal peptidase complex catalytic subunit sec11 (sec11) from Talaromyces marneffei (strain ATCC 18224 / CBS 334.59 / QM 7333) (Penicillium marneffei).